Reading from the N-terminus, the 31-residue chain is Potassium channel toxin alpha-KTx 5.1 (31 aa).

3 cysteine pairs are disulfide-bonded: C3–C21, C8–C26, and C12–C28. The [R/K]XCQ motif stretch occupies residues 6–9; it reads RMCQ. H31 carries the histidine amide modification.

The protein belongs to the short scorpion toxin superfamily. Potassium channel inhibitor family. Alpha-KTx 05 subfamily. In terms of processing, two disulfide bonds are the minimal requirement needed to produce a nativelike and bio-active conformation in this toxin. The third disulfide provides an additional contribution to structure stabilization and can modulate biological potency depending on its position and the structural regions involved in biological activity. As to expression, expressed by the venom gland.

It is found in the secreted. Blocker for the small conductance calcium-activated potassium channels. Shows the best affinity for KCa2.2/KCNN2 (Kd=0.2 nM), followed by KCa2.3/KCNN3 (Kd=1.1 nM) and KCa2.1/KCNN1 (Kd=325 nM). The protein is Potassium channel toxin alpha-KTx 5.1 of Leiurus hebraeus (Hebrew deathstalker scorpion).